A 380-amino-acid chain; its full sequence is Homoserine O-succinyltransferase (380 aa).

The AB hydrolase-1 domain occupies 49-357 (NAILICHALS…ESTHGHDAFL (309 aa)). Ser-155 serves as the catalytic Nucleophile. Arg-225 is a substrate binding site. Catalysis depends on residues Asp-320 and His-353. Substrate is bound at residue Asp-354.

Belongs to the AB hydrolase superfamily. MetX family. As to quaternary structure, homodimer.

It localises to the cytoplasm. The catalysed reaction is L-homoserine + succinyl-CoA = O-succinyl-L-homoserine + CoA. Its pathway is amino-acid biosynthesis; L-methionine biosynthesis via de novo pathway; O-succinyl-L-homoserine from L-homoserine: step 1/1. Its function is as follows. Transfers a succinyl group from succinyl-CoA to L-homoserine, forming succinyl-L-homoserine. This Laribacter hongkongensis (strain HLHK9) protein is Homoserine O-succinyltransferase.